Consider the following 247-residue polypeptide: Eukaryotic translation initiation factor 6 (247 aa).

2 positions are modified to phosphoserine; by CK1: Ser-174 and Ser-175.

It belongs to the eIF-6 family. In terms of assembly, monomer. Associates with the 60S ribosomal subunit. Post-translationally, phosphorylation at Ser-174 and Ser-175 promotes nuclear export.

The protein localises to the cytoplasm. It is found in the nucleus. The protein resides in the nucleolus. Its function is as follows. Binds to the 60S ribosomal subunit and prevents its association with the 40S ribosomal subunit to form the 80S initiation complex in the cytoplasm. Is also involved in ribosome biogenesis. Associates with pre-60S subunits in the nucleus and is involved in its nuclear export. This chain is Eukaryotic translation initiation factor 6 (tif6), found in Talaromyces stipitatus (strain ATCC 10500 / CBS 375.48 / QM 6759 / NRRL 1006) (Penicillium stipitatum).